A 520-amino-acid polypeptide reads, in one-letter code: Hydroxymethylglutaryl-CoA synthase, cytoplasmic (520 aa).

Ser-4 carries the post-translational modification Phosphoserine. Residue Ala-44 coordinates (3S)-3-hydroxy-3-methylglutaryl-CoA. A CoA-binding site is contributed by 44–46; the sequence is AGK. Lys-46 carries the N6-acetyllysine modification. Glu-95 (proton donor/acceptor) is an active-site residue. Positions 129, 167, 171, 221, and 264 each coordinate (3S)-3-hydroxy-3-methylglutaryl-CoA. Cys-129 (acyl-thioester intermediate) is an active-site residue. A CoA-binding site is contributed by Asn-167. Position 221 (Ser-221) interacts with CoA. His-264 (proton donor/acceptor) is an active-site residue. Residues Lys-269 and Lys-273 each contribute to the CoA site. Residues Lys-273, Asn-343, and Ser-377 each coordinate (3S)-3-hydroxy-3-methylglutaryl-CoA. An N6-acetyllysine modification is found at Lys-273. A Phosphothreonine modification is found at Thr-476. The segment at 492-520 is disordered; it reads HIPSPAKKVPRLPATAAEPEAAVISNGEH. Phosphoserine is present on residues Ser-495 and Ser-516.

The protein belongs to the thiolase-like superfamily. HMG-CoA synthase family. Homodimer.

The protein localises to the cytoplasm. The catalysed reaction is acetoacetyl-CoA + acetyl-CoA + H2O = (3S)-3-hydroxy-3-methylglutaryl-CoA + CoA + H(+). The protein operates within metabolic intermediate biosynthesis; (R)-mevalonate biosynthesis; (R)-mevalonate from acetyl-CoA: step 2/3. Catalyzes the condensation of acetyl-CoA with acetoacetyl-CoA to form HMG-CoA, which is converted by HMG-CoA reductase (HMGCR) into mevalonate, a precursor for cholesterol synthesis. This is Hydroxymethylglutaryl-CoA synthase, cytoplasmic from Pongo abelii (Sumatran orangutan).